The primary structure comprises 498 residues: ATP synthase subunit beta, chloroplastic (498 aa).

Residue 172-179 (GGAGVGKT) participates in ATP binding.

The protein belongs to the ATPase alpha/beta chains family. In terms of assembly, F-type ATPases have 2 components, CF(1) - the catalytic core - and CF(0) - the membrane proton channel. CF(1) has five subunits: alpha(3), beta(3), gamma(1), delta(1), epsilon(1). CF(0) has four main subunits: a(1), b(1), b'(1) and c(9-12).

Its subcellular location is the plastid. The protein resides in the chloroplast thylakoid membrane. It catalyses the reaction ATP + H2O + 4 H(+)(in) = ADP + phosphate + 5 H(+)(out). Its function is as follows. Produces ATP from ADP in the presence of a proton gradient across the membrane. The catalytic sites are hosted primarily by the beta subunits. The protein is ATP synthase subunit beta, chloroplastic of Nymphaea alba (White water-lily).